We begin with the raw amino-acid sequence, 201 residues long: ATP-dependent Clp protease proteolytic subunit 1 (201 aa).

Serine 102 functions as the Nucleophile in the catalytic mechanism. Histidine 127 is an active-site residue.

This sequence belongs to the peptidase S14 family. As to quaternary structure, fourteen ClpP subunits assemble into 2 heptameric rings which stack back to back to give a disk-like structure with a central cavity, resembling the structure of eukaryotic proteasomes.

It localises to the cytoplasm. It catalyses the reaction Hydrolysis of proteins to small peptides in the presence of ATP and magnesium. alpha-casein is the usual test substrate. In the absence of ATP, only oligopeptides shorter than five residues are hydrolyzed (such as succinyl-Leu-Tyr-|-NHMec, and Leu-Tyr-Leu-|-Tyr-Trp, in which cleavage of the -Tyr-|-Leu- and -Tyr-|-Trp bonds also occurs).. Its function is as follows. Cleaves peptides in various proteins in a process that requires ATP hydrolysis. Has a chymotrypsin-like activity. Plays a major role in the degradation of misfolded proteins. This is ATP-dependent Clp protease proteolytic subunit 1 from Mesorhizobium japonicum (strain LMG 29417 / CECT 9101 / MAFF 303099) (Mesorhizobium loti (strain MAFF 303099)).